Reading from the N-terminus, the 361-residue chain is Molybdenum import ATP-binding protein ModC 1 (361 aa).

The ABC transporter domain maps to 1-237; it reads MPADGIRARF…LDLPTAFHED (237 aa). ATP is bound at residue 35–42; that stretch reads GHSGSGKT. Residues 296–361 form the Mop domain; sequence DSSITNVLPA…AQIKAVALLG (66 aa).

The protein belongs to the ABC transporter superfamily. Molybdate importer (TC 3.A.1.8) family. As to quaternary structure, the complex is composed of two ATP-binding proteins (ModC), two transmembrane proteins (ModB) and a solute-binding protein (ModA).

It is found in the cell inner membrane. The catalysed reaction is molybdate(out) + ATP + H2O = molybdate(in) + ADP + phosphate + H(+). Part of the ABC transporter complex ModABC involved in molybdenum import. Responsible for energy coupling to the transport system. This chain is Molybdenum import ATP-binding protein ModC 1, found in Azotobacter vinelandii.